The primary structure comprises 524 residues: Cytokinin dehydrogenase 7 (524 aa).

Positions 1–22 (MAARCSIAFMIMASCLSVVVSG) are cleaved as a signal peptide. A glycan (N-linked (GlcNAc...) asparagine) is linked at Asn-42. Residues 55–233 (VAAAPEAVLH…TRARIGLMPA (179 aa)) enclose the FAD-binding PCMH-type domain. Residues Gly-91 and Gly-93 each coordinate FAD. His-94 is subject to Pros-8alpha-FAD histidine. Residues Ser-95 and Gln-99 each contribute to the FAD site. Asn-121 carries N-linked (GlcNAc...) asparagine glycosylation. The FAD site is built by Asp-157, Thr-162, Ser-168, Ile-172, and Ile-223. Residues Asn-277 and Asn-320 are each glycosylated (N-linked (GlcNAc...) asparagine). FAD is bound by residues Tyr-472, Ser-507, and Gln-510.

It belongs to the oxygen-dependent FAD-linked oxidoreductase family. In terms of assembly, monomer. FAD serves as cofactor.

The protein resides in the secreted. The protein localises to the extracellular space. It carries out the reaction N(6)-dimethylallyladenine + A + H2O = 3-methyl-2-butenal + adenine + AH2. Its function is as follows. Catalyzes the oxidation of cytokinins, a family of N(6)-substituted adenine derivatives that are plant hormones, where the substituent is an isopentenyl group. The protein is Cytokinin dehydrogenase 7 (CKX7) of Oryza sativa subsp. japonica (Rice).